We begin with the raw amino-acid sequence, 196 residues long: 3-isopropylmalate dehydratase small subunit (196 aa).

It belongs to the LeuD family. LeuD type 1 subfamily. As to quaternary structure, heterodimer of LeuC and LeuD.

It carries out the reaction (2R,3S)-3-isopropylmalate = (2S)-2-isopropylmalate. The protein operates within amino-acid biosynthesis; L-leucine biosynthesis; L-leucine from 3-methyl-2-oxobutanoate: step 2/4. In terms of biological role, catalyzes the isomerization between 2-isopropylmalate and 3-isopropylmalate, via the formation of 2-isopropylmaleate. The chain is 3-isopropylmalate dehydratase small subunit from Rhodopirellula baltica (strain DSM 10527 / NCIMB 13988 / SH1).